A 147-amino-acid polypeptide reads, in one-letter code: Large ribosomal subunit protein uL15 (147 aa).

The segment at 1–45 is disordered; sequence MRLEDLRPTPGAMKKRKRVGRGPGSGHGKTSGRGHKGQKARGSGK. Residues 30–44 are compositionally biased toward basic residues; it reads TSGRGHKGQKARGSG.

It belongs to the universal ribosomal protein uL15 family. As to quaternary structure, part of the 50S ribosomal subunit.

Binds to the 23S rRNA. The protein is Large ribosomal subunit protein uL15 of Thermotoga sp. (strain RQ2).